A 493-amino-acid polypeptide reads, in one-letter code: Glutamate--tRNA ligase (493 aa).

The 'HIGH' region signature appears at 10–20 (PSPTGDPHVGT). Cys-107, Cys-109, Cys-134, and His-136 together coordinate Zn(2+). The 'KMSKS' region motif lies at 251–255 (KLSKR). Lys-254 provides a ligand contact to ATP.

Belongs to the class-I aminoacyl-tRNA synthetase family. Glutamate--tRNA ligase type 1 subfamily. Monomer. Zn(2+) is required as a cofactor.

Its subcellular location is the cytoplasm. It catalyses the reaction tRNA(Glu) + L-glutamate + ATP = L-glutamyl-tRNA(Glu) + AMP + diphosphate. In terms of biological role, catalyzes the attachment of glutamate to tRNA(Glu) in a two-step reaction: glutamate is first activated by ATP to form Glu-AMP and then transferred to the acceptor end of tRNA(Glu). This chain is Glutamate--tRNA ligase, found in Stutzerimonas stutzeri (strain A1501) (Pseudomonas stutzeri).